The sequence spans 248 residues: tRNA pseudouridine synthase A (248 aa).

Residue Asp53 is the Nucleophile of the active site. Position 111 (Tyr111) interacts with substrate.

It belongs to the tRNA pseudouridine synthase TruA family. In terms of assembly, homodimer.

It carries out the reaction uridine(38/39/40) in tRNA = pseudouridine(38/39/40) in tRNA. Functionally, formation of pseudouridine at positions 38, 39 and 40 in the anticodon stem and loop of transfer RNAs. The chain is tRNA pseudouridine synthase A from Listeria monocytogenes serotype 4a (strain HCC23).